Consider the following 516-residue polypeptide: Lipid II flippase MurJ (516 aa).

The next 11 helical transmembrane spans lie at 93–113 (WALA…VFAV), 133–153 (IMFP…VLNT), 159–179 (LPAF…VFVA), 188–208 (ALAW…LPGL), 233–253 (VLAK…SLII), 275–295 (LMEF…LPSL), 317–337 (VTFL…TPLT), 358–378 (LATY…APGF), 390–409 (IAIG…VPLI), 448–468 (FFVQ…WCAI), and 483–503 (IALM…MLWV).

It belongs to the MurJ/MviN family.

It is found in the cell inner membrane. The protein operates within cell wall biogenesis; peptidoglycan biosynthesis. Involved in peptidoglycan biosynthesis. Transports lipid-linked peptidoglycan precursors from the inner to the outer leaflet of the cytoplasmic membrane. This is Lipid II flippase MurJ from Burkholderia cenocepacia (strain ATCC BAA-245 / DSM 16553 / LMG 16656 / NCTC 13227 / J2315 / CF5610) (Burkholderia cepacia (strain J2315)).